We begin with the raw amino-acid sequence, 125 residues long: MTKSIGCDIIKVTRFNSFLQNRKKLDRFFTQREIENLEMKGKGILESLAGKFSAKEALIKALSPLINTKIKYSLKDIEIIALPKGNIIFQLHNDIKVLIEQMDLKLYLTISHEREYAIAFVIVED.

Asp8 and Glu56 together coordinate Mg(2+).

This sequence belongs to the P-Pant transferase superfamily. AcpS family. It depends on Mg(2+) as a cofactor.

The protein resides in the cytoplasm. The enzyme catalyses apo-[ACP] + CoA = holo-[ACP] + adenosine 3',5'-bisphosphate + H(+). Its function is as follows. Transfers the 4'-phosphopantetheine moiety from coenzyme A to a Ser of acyl-carrier-protein. This chain is Holo-[acyl-carrier-protein] synthase, found in Borrelia hermsii (strain HS1 / DAH).